Consider the following 347-residue polypeptide: tRNA N6-adenosine threonylcarbamoyltransferase (347 aa).

Fe cation-binding residues include histidine 115 and histidine 119. Residues 137–141 (LASGG), aspartate 170, glycine 183, and asparagine 281 each bind substrate. Fe cation is bound at residue aspartate 309.

It belongs to the KAE1 / TsaD family. It depends on Fe(2+) as a cofactor.

It localises to the cytoplasm. It carries out the reaction L-threonylcarbamoyladenylate + adenosine(37) in tRNA = N(6)-L-threonylcarbamoyladenosine(37) in tRNA + AMP + H(+). Functionally, required for the formation of a threonylcarbamoyl group on adenosine at position 37 (t(6)A37) in tRNAs that read codons beginning with adenine. Is involved in the transfer of the threonylcarbamoyl moiety of threonylcarbamoyl-AMP (TC-AMP) to the N6 group of A37, together with TsaE and TsaB. TsaD likely plays a direct catalytic role in this reaction. This Methylorubrum extorquens (strain CM4 / NCIMB 13688) (Methylobacterium extorquens) protein is tRNA N6-adenosine threonylcarbamoyltransferase.